Reading from the N-terminus, the 172-residue chain is 3-hydroxydecanoyl-[acyl-carrier-protein] dehydratase (172 aa).

His-71 is a catalytic residue.

This sequence belongs to the thioester dehydratase family. FabA subfamily. Homodimer.

The protein localises to the cytoplasm. The catalysed reaction is a (3R)-hydroxyacyl-[ACP] = a (2E)-enoyl-[ACP] + H2O. It catalyses the reaction (3R)-hydroxydecanoyl-[ACP] = (2E)-decenoyl-[ACP] + H2O. It carries out the reaction (2E)-decenoyl-[ACP] = (3Z)-decenoyl-[ACP]. It participates in lipid metabolism; fatty acid biosynthesis. Functionally, necessary for the introduction of cis unsaturation into fatty acids. Catalyzes the dehydration of (3R)-3-hydroxydecanoyl-ACP to E-(2)-decenoyl-ACP and then its isomerization to Z-(3)-decenoyl-ACP. Can catalyze the dehydratase reaction for beta-hydroxyacyl-ACPs with saturated chain lengths up to 16:0, being most active on intermediate chain length. This Photorhabdus laumondii subsp. laumondii (strain DSM 15139 / CIP 105565 / TT01) (Photorhabdus luminescens subsp. laumondii) protein is 3-hydroxydecanoyl-[acyl-carrier-protein] dehydratase.